Consider the following 373-residue polypeptide: Probable peptidoglycan glycosyltransferase FtsW (373 aa).

Transmembrane regions (helical) follow at residues Leu15–Ala35, Phe48–Ala68, Ala80–Gly100, Phe144–Leu164, Asp168–Thr188, Tyr192–Asp212, Leu278–Val298, Phe311–Val331, and Leu342–Leu362.

The protein belongs to the SEDS family. FtsW subfamily.

The protein resides in the cell inner membrane. The enzyme catalyses [GlcNAc-(1-&gt;4)-Mur2Ac(oyl-L-Ala-gamma-D-Glu-L-Lys-D-Ala-D-Ala)](n)-di-trans,octa-cis-undecaprenyl diphosphate + beta-D-GlcNAc-(1-&gt;4)-Mur2Ac(oyl-L-Ala-gamma-D-Glu-L-Lys-D-Ala-D-Ala)-di-trans,octa-cis-undecaprenyl diphosphate = [GlcNAc-(1-&gt;4)-Mur2Ac(oyl-L-Ala-gamma-D-Glu-L-Lys-D-Ala-D-Ala)](n+1)-di-trans,octa-cis-undecaprenyl diphosphate + di-trans,octa-cis-undecaprenyl diphosphate + H(+). The protein operates within cell wall biogenesis; peptidoglycan biosynthesis. In terms of biological role, peptidoglycan polymerase that is essential for cell division. The polypeptide is Probable peptidoglycan glycosyltransferase FtsW (Geobacter sulfurreducens (strain DL-1 / KN400)).